Here is a 516-residue protein sequence, read N- to C-terminus: tRNA-2-methylthio-N(6)-dimethylallyladenosine synthase (516 aa).

The 117-residue stretch at 17-133 (RSFEVRTFGC…LPSLLSRSEH (117 aa)) folds into the MTTase N-terminal domain. Residues Cys-26, Cys-62, Cys-96, Cys-170, Cys-174, and Cys-177 each coordinate [4Fe-4S] cluster. The region spanning 156-392 (RESAYAGWVS…LALQERISTE (237 aa)) is the Radical SAM core domain. The TRAM domain occupies 395-466 (AKLIGTEVEL…PFFLIADSGV (72 aa)). Disordered stretches follow at residues 409-438 (SGGR…QGHV) and 492-516 (GLGL…GCGC). The segment covering 412 to 438 (RKNDKTQRMTGRSRDGRLVHFDPQGHV) has biased composition (basic and acidic residues).

It belongs to the methylthiotransferase family. MiaB subfamily. As to quaternary structure, monomer. Requires [4Fe-4S] cluster as cofactor.

Its subcellular location is the cytoplasm. It carries out the reaction N(6)-dimethylallyladenosine(37) in tRNA + (sulfur carrier)-SH + AH2 + 2 S-adenosyl-L-methionine = 2-methylsulfanyl-N(6)-dimethylallyladenosine(37) in tRNA + (sulfur carrier)-H + 5'-deoxyadenosine + L-methionine + A + S-adenosyl-L-homocysteine + 2 H(+). In terms of biological role, catalyzes the methylthiolation of N6-(dimethylallyl)adenosine (i(6)A), leading to the formation of 2-methylthio-N6-(dimethylallyl)adenosine (ms(2)i(6)A) at position 37 in tRNAs that read codons beginning with uridine. The sequence is that of tRNA-2-methylthio-N(6)-dimethylallyladenosine synthase from Corynebacterium diphtheriae (strain ATCC 700971 / NCTC 13129 / Biotype gravis).